The primary structure comprises 209 residues: N-(5'-phosphoribosyl)anthranilate isomerase (209 aa).

This sequence belongs to the TrpF family.

It catalyses the reaction N-(5-phospho-beta-D-ribosyl)anthranilate = 1-(2-carboxyphenylamino)-1-deoxy-D-ribulose 5-phosphate. The protein operates within amino-acid biosynthesis; L-tryptophan biosynthesis; L-tryptophan from chorismate: step 3/5. This chain is N-(5'-phosphoribosyl)anthranilate isomerase, found in Erythrobacter litoralis (strain HTCC2594).